A 477-amino-acid chain; its full sequence is Dihydrolipoyl dehydrogenase (477 aa).

FAD contacts are provided by residues 34 to 49 (EKYKGKEGKTALGGTC), K58, and G122. C49 and C54 form a disulfide bridge. Residues 188-192 (GAGVI), E211, V245, and 276-279 (AVGR) contribute to the NAD(+) site. Residues D319 and A327 each contribute to the FAD site. The Proton acceptor role is filled by H451.

It belongs to the class-I pyridine nucleotide-disulfide oxidoreductase family. Homodimer. Requires FAD as cofactor.

The protein resides in the cytoplasm. The enzyme catalyses N(6)-[(R)-dihydrolipoyl]-L-lysyl-[protein] + NAD(+) = N(6)-[(R)-lipoyl]-L-lysyl-[protein] + NADH + H(+). Functionally, the pyruvate dehydrogenase complex catalyzes the overall conversion of pyruvate to acetyl-CoA and CO(2). It contains multiple copies of three enzymatic components: pyruvate dehydrogenase (E1), dihydrolipoamide acetyltransferase (E2) and lipoamide dehydrogenase (E3). The polypeptide is Dihydrolipoyl dehydrogenase (Azotobacter vinelandii).